The primary structure comprises 482 residues: tRNA sulfurtransferase (482 aa).

Positions 61–165 (LAIRDALTRI…DDRLLLIKGR (105 aa)) constitute a THUMP domain. Residues 183–184 (LI), Lys265, Gly287, and Gln296 contribute to the ATP site. The cysteines at positions 344 and 456 are disulfide-linked. Residues 404 to 482 (FGPNDVILDI…GFNNVKVYRP (79 aa)) form the Rhodanese domain. Cys456 functions as the Cysteine persulfide intermediate in the catalytic mechanism.

It belongs to the ThiI family.

It localises to the cytoplasm. The catalysed reaction is [ThiI sulfur-carrier protein]-S-sulfanyl-L-cysteine + a uridine in tRNA + 2 reduced [2Fe-2S]-[ferredoxin] + ATP + H(+) = [ThiI sulfur-carrier protein]-L-cysteine + a 4-thiouridine in tRNA + 2 oxidized [2Fe-2S]-[ferredoxin] + AMP + diphosphate. It catalyses the reaction [ThiS sulfur-carrier protein]-C-terminal Gly-Gly-AMP + S-sulfanyl-L-cysteinyl-[cysteine desulfurase] + AH2 = [ThiS sulfur-carrier protein]-C-terminal-Gly-aminoethanethioate + L-cysteinyl-[cysteine desulfurase] + A + AMP + 2 H(+). Its pathway is cofactor biosynthesis; thiamine diphosphate biosynthesis. Functionally, catalyzes the ATP-dependent transfer of a sulfur to tRNA to produce 4-thiouridine in position 8 of tRNAs, which functions as a near-UV photosensor. Also catalyzes the transfer of sulfur to the sulfur carrier protein ThiS, forming ThiS-thiocarboxylate. This is a step in the synthesis of thiazole, in the thiamine biosynthesis pathway. The sulfur is donated as persulfide by IscS. The protein is tRNA sulfurtransferase of Escherichia coli (strain K12 / MC4100 / BW2952).